The following is a 313-amino-acid chain: Ribosomal protein L11 methyltransferase (313 aa).

The S-adenosyl-L-methionine site is built by threonine 161, glycine 182, aspartate 204, and asparagine 246.

The protein belongs to the methyltransferase superfamily. PrmA family.

It is found in the cytoplasm. It carries out the reaction L-lysyl-[protein] + 3 S-adenosyl-L-methionine = N(6),N(6),N(6)-trimethyl-L-lysyl-[protein] + 3 S-adenosyl-L-homocysteine + 3 H(+). Its function is as follows. Methylates ribosomal protein L11. The protein is Ribosomal protein L11 methyltransferase of Acetivibrio thermocellus (strain ATCC 27405 / DSM 1237 / JCM 9322 / NBRC 103400 / NCIMB 10682 / NRRL B-4536 / VPI 7372) (Clostridium thermocellum).